A 103-amino-acid polypeptide reads, in one-letter code: Histone H4 type VIII (103 aa).

A compositionally biased stretch (gly residues) spans Met-1–Gly-14. The tract at residues Met-1–Arg-20 is disordered. N-acetylserine is present on Ser-2. Phosphoserine is present on Ser-2. Arg-4 is modified (asymmetric dimethylarginine; by PRMT1; alternate). Arg-4 carries the post-translational modification Citrulline; alternate. Arg-4 bears the Omega-N-methylarginine; by PRMT1; alternate mark. Arg-4 is modified (symmetric dimethylarginine; by PRMT5 and PRMT7; alternate). 4 positions are modified to N6-(2-hydroxyisobutyryl)lysine; alternate: Lys-6, Lys-9, Lys-13, and Lys-17. N6-acetyl-N6-methyllysine; alternate is present on Lys-6. An N6-acetyllysine mark is found at Lys-6, Lys-9, Lys-13, and Lys-17. N6-butyryllysine; alternate occurs at positions 6, 9, 13, and 17. The residue at position 6 (Lys-6) is an N6-glutaryllysine; alternate. N6-lactoyllysine; alternate is present on residues Lys-6, Lys-9, Lys-13, and Lys-17. Lys-9 bears the N6-propionyllysine; alternate mark. The residue at position 13 (Lys-13) is an N6-acetyl-N6-methyllysine; alternate. At Lys-13 the chain carries N6-glutaryllysine; alternate. Lys-13 bears the N6-methyllysine; alternate mark. Residue Lys-17 is modified to N6-propionyllysine; alternate. Lys-21 bears the N6-methyllysine; alternate mark. Position 21 is an N6,N6,N6-trimethyllysine; alternate (Lys-21). Lys-21 bears the N6,N6-dimethyllysine; alternate mark. An N6-(2-hydroxyisobutyryl)lysine; alternate mark is found at Lys-32 and Lys-45. An N6-acetyllysine modification is found at Lys-32. An N6-butyryllysine; alternate mark is found at Lys-32 and Lys-45. At Lys-32 the chain carries N6-glutaryllysine; alternate. N6-lactoyllysine; alternate is present on Lys-32. Residues Lys-32 and Lys-45 each carry the N6-propionyllysine; alternate modification. Position 32 is an N6-succinyllysine; alternate (Lys-32). Residue Lys-32 forms a Glycyl lysine isopeptide (Lys-Gly) (interchain with G-Cter in UFM1); alternate linkage. Ser-48 carries the phosphoserine modification. Tyr-52 is modified (phosphotyrosine). Lys-60 is modified (N6-acetyllysine). N6-glutaryllysine; alternate is present on residues Lys-60, Lys-78, and Lys-80. Residue Lys-60 is modified to N6-(2-hydroxyisobutyryl)lysine. Lys-78 and Lys-80 each carry N6-(2-hydroxyisobutyryl)lysine; alternate. N6-butyryllysine; alternate occurs at positions 78 and 80. Lys-78 carries the N6-lactoyllysine; alternate modification. N6-propionyllysine; alternate occurs at positions 78 and 80. Lys-78 carries the post-translational modification N6-succinyllysine. Residue Lys-80 is modified to N6-acetyllysine. Tyr-89 carries the post-translational modification Phosphotyrosine. Lys-92 is subject to N6-(2-hydroxyisobutyryl)lysine; alternate. Residue Lys-92 is modified to N6-butyryllysine; alternate. Lys-92 is modified (N6-glutaryllysine; alternate). Lys-92 is subject to N6-lactoyllysine; alternate. Lys-92 carries the post-translational modification N6-propionyllysine; alternate. An N6-succinyllysine; alternate modification is found at Lys-92. Residue Lys-92 is modified to N6-acetyllysine; alternate. A Glycyl lysine isopeptide (Lys-Gly) (interchain with G-Cter in ubiquitin); alternate cross-link involves residue Lys-92.

This sequence belongs to the histone H4 family. In terms of assembly, the nucleosome is a histone octamer containing two molecules each of H2A, H2B, H3 and H4 assembled in one H3-H4 heterotetramer and two H2A-H2B heterodimers. The octamer wraps approximately 147 bp of DNA. Acetylation at Lys-6 (H4K5ac), Lys-9 (H4K8ac), Lys-13 (H4K12ac) and Lys-17 (H4K16ac) occurs in coding regions of the genome but not in heterochromatin. In terms of processing, citrullination at Arg-4 (H4R3ci) by PADI4 impairs methylation. Post-translationally, monomethylation and asymmetric dimethylation at Arg-4 (H4R3me1 and H4R3me2a, respectively) by PRMT1 favors acetylation at Lys-9 (H4K8ac) and Lys-13 (H4K12ac). Demethylation is performed by JMJD6. Symmetric dimethylation on Arg-4 (H4R3me2s) by the PRDM1/PRMT5 complex may play a crucial role in the germ-cell lineage. Monomethylated, dimethylated or trimethylated at Lys-21 (H4K20me1, H4K20me2, H4K20me3). Monomethylation is performed by KMT5A/SET8. Trimethylation is performed by KMT5B and KMT5C and induces gene silencing. Monomethylated at Lys-13 (H4K12me1) by N6AMT1; H4K12me1 modification is present at the promoters of numerous genes encoding cell cycle regulators. In terms of processing, acetyl-methylated at Lys-6 and Lys-13 (H4K5acme and H4K12acme, respectively), acetyl-methylation is an epigenetic mark of active chromatin associated with increased transcriptional initiation. Acetyl-methylation is formed by acetylation by EP300/p300 of lysine residues that are already monomethylated on the same side chain. H4K5acme and H4K12acme marks specifically bind BRD2. Post-translationally, ubiquitinated by the CUL4-DDB-RBX1 complex in response to ultraviolet irradiation. This may weaken the interaction between histones and DNA and facilitate DNA accessibility to repair proteins. Monoubiquitinated at Lys-92 of histone H4 (H4K91ub1) in response to DNA damage. The exact role of H4K91ub1 in DNA damage response is still unclear but it may function as a licensing signal for additional histone H4 post-translational modifications such as H4 Lys-21 methylation (H4K20me). Sumoylated, which is associated with transcriptional repression. In terms of processing, butyrylation of histones marks active promoters and competes with histone acetylation. Post-translationally, glutarylation at Lys-92 (H4K91glu) destabilizes nucleosomes by promoting dissociation of the H2A-H2B dimers from nucleosomes. Ufmylated; monofmylated by UFL1 at Lys-32 (H4K31Ufm1) in response to DNA damage. In terms of processing, lactylated in macrophages by EP300/P300 by using lactoyl-CoA directly derived from endogenous or exogenous lactate, leading to stimulates gene transcription. Delactylated by SIRT3 at Lys-17 (H4K16la).

The protein localises to the nucleus. The protein resides in the chromosome. Functionally, core component of nucleosome. Nucleosomes wrap and compact DNA into chromatin, limiting DNA accessibility to the cellular machineries which require DNA as a template. Histones thereby play a central role in transcription regulation, DNA repair, DNA replication and chromosomal stability. DNA accessibility is regulated via a complex set of post-translational modifications of histones, also called histone code, and nucleosome remodeling. This Gallus gallus (Chicken) protein is Histone H4 type VIII (H4-VIII).